A 1287-amino-acid chain; its full sequence is DNA-directed RNA polymerase 147 kDa polypeptide (1287 aa).

This sequence belongs to the poxviridae DNA-directed RNA polymerase 147 kDa subunit family. The DNA-dependent RNA polymerase used for intermediate and late genes expression consists of eight subunits Rpo30/OPG66, Rpo7/OPG90, Rpo22/OPG103, Rpo147/OPG105, Rpo18/OPG119, Rpo19/OPG131, Rpo132/OPG151 and Rpo35/OPG156. The same holoenzyme, with the addition of the transcription-specificity factor OPG109, is used for early gene expression.

The protein resides in the virion. It catalyses the reaction RNA(n) + a ribonucleoside 5'-triphosphate = RNA(n+1) + diphosphate. Part of the DNA-dependent RNA polymerase which catalyzes the transcription of viral DNA into RNA using the four ribonucleoside triphosphates as substrates. Responsible for the transcription of early, intermediate and late genes. DNA-dependent RNA polymerase associates with the early transcription factor (ETF), itself composed of OPG118 and OPG133, thereby allowing the early genes transcription. Late transcription, and probably also intermediate transcription, require newly synthesized RNA polymerase. The protein is DNA-directed RNA polymerase 147 kDa polypeptide (OPG105) of Bos taurus (Bovine).